We begin with the raw amino-acid sequence, 74 residues long: Protein SlyX homolog (74 aa).

Residues glutamine 54 to tyrosine 74 form a disordered region.

It belongs to the SlyX family.

This chain is Protein SlyX homolog, found in Neisseria gonorrhoeae (strain ATCC 700825 / FA 1090).